A 214-amino-acid chain; its full sequence is Pyridoxine/pyridoxamine 5'-phosphate oxidase (214 aa).

Residues 9-12 (RKNY) and Lys-67 contribute to the substrate site. FMN is bound by residues 62–67 (RIVLLK), 77–78 (YT), Lys-83, Lys-84, and Gln-106. Positions 124, 128, and 132 each coordinate substrate. Residues 141 to 142 (QS) and Trp-186 each bind FMN. Substrate is bound at residue 192 to 194 (RLH). FMN is bound at residue Arg-196.

Belongs to the pyridoxamine 5'-phosphate oxidase family. In terms of assembly, homodimer. Requires FMN as cofactor.

The enzyme catalyses pyridoxamine 5'-phosphate + O2 + H2O = pyridoxal 5'-phosphate + H2O2 + NH4(+). It carries out the reaction pyridoxine 5'-phosphate + O2 = pyridoxal 5'-phosphate + H2O2. It participates in cofactor metabolism; pyridoxal 5'-phosphate salvage; pyridoxal 5'-phosphate from pyridoxamine 5'-phosphate: step 1/1. Its pathway is cofactor metabolism; pyridoxal 5'-phosphate salvage; pyridoxal 5'-phosphate from pyridoxine 5'-phosphate: step 1/1. Catalyzes the oxidation of either pyridoxine 5'-phosphate (PNP) or pyridoxamine 5'-phosphate (PMP) into pyridoxal 5'-phosphate (PLP). This is Pyridoxine/pyridoxamine 5'-phosphate oxidase from Leptospira borgpetersenii serovar Hardjo-bovis (strain JB197).